We begin with the raw amino-acid sequence, 196 residues long: ECF RNA polymerase sigma factor SigK (196 aa).

The tract at residues 39-105 (YDQTRARVYG…RAVDRVRSEQ (67 aa)) is sigma-70 factor domain-2. Positions 62-65 (ETTQ) match the Polymerase core binding motif. Positions 142–191 (CLDSLTDVQRECIQLAYYDGLTYAQVADRLAANLATIKSRMRDGIRALRK) are sigma-70 factor domain-4. A DNA-binding region (H-T-H motif) is located at residues 164-183 (YAQVADRLAANLATIKSRMR).

It belongs to the sigma-70 factor family. ECF subfamily. Interacts transiently with the RNA polymerase catalytic core formed by RpoA, RpoB, RpoC and RpoZ (2 alpha, 1 beta, 1 beta' and 1 omega subunit) to form the RNA polymerase holoenzyme that can initiate transcription. Interacts (via sigma-70 factor domain 4) with anti-sigma-K factor RskA.

Functionally, sigma factors are initiation factors that promote the attachment of RNA polymerase to specific initiation sites and are then released. Extracytoplasmic function (ECF) sigma factors are held in an inactive form by an anti-sigma factor until released by regulated intramembrane proteolysis. The polypeptide is ECF RNA polymerase sigma factor SigK (sigK) (Mycolicibacterium vanbaalenii (strain DSM 7251 / JCM 13017 / BCRC 16820 / KCTC 9966 / NRRL B-24157 / PYR-1) (Mycobacterium vanbaalenii)).